Here is a 330-residue protein sequence, read N- to C-terminus: Glycerol-3-phosphate dehydrogenase [NAD(P)+] (330 aa).

S10, W11, R31, and K105 together coordinate NADPH. Residues K105, G135, and S137 each coordinate sn-glycerol 3-phosphate. A139 serves as a coordination point for NADPH. Residues K190, D243, S253, R254, and N255 each contribute to the sn-glycerol 3-phosphate site. K190 serves as the catalytic Proton acceptor. R254 is a binding site for NADPH. The NADPH site is built by V278 and E280.

The protein belongs to the NAD-dependent glycerol-3-phosphate dehydrogenase family.

Its subcellular location is the cytoplasm. The enzyme catalyses sn-glycerol 3-phosphate + NAD(+) = dihydroxyacetone phosphate + NADH + H(+). It catalyses the reaction sn-glycerol 3-phosphate + NADP(+) = dihydroxyacetone phosphate + NADPH + H(+). Its pathway is membrane lipid metabolism; glycerophospholipid metabolism. Functionally, catalyzes the reduction of the glycolytic intermediate dihydroxyacetone phosphate (DHAP) to sn-glycerol 3-phosphate (G3P), the key precursor for phospholipid synthesis. This Nitratidesulfovibrio vulgaris (strain DP4) (Desulfovibrio vulgaris) protein is Glycerol-3-phosphate dehydrogenase [NAD(P)+].